The primary structure comprises 718 residues: Acetolactate synthase, mitochondrial (718 aa).

Disordered stretches follow at residues 1–53 and 75–99; these read MLTR…YDTP and QSSA…QAAP. The segment covering 32-45 has biased composition (polar residues); it reads RYSNNIHTSSTQNA. The segment covering 76–99 has biased composition (low complexity); that stretch reads SSASTAAASPAVRPQPAQHFQAAP. Residue Glu-173 coordinates thiamine diphosphate. Position 275 (Arg-275) interacts with FAD. The interval 301-326 is disordered; sequence VQPGHSPYLPSNPLNPSSQPSDPLPG. Residues 306–325 show a composition bias toward low complexity; that stretch reads SPYLPSNPLNPSSQPSDPLP. FAD contacts are provided by residues 397 to 418 and 449 to 468; these read HGSA…LGVR and EIQP…VLGD. The tract at residues 541–621 is thiamine pyrophosphate binding; sequence QHQMWACQYY…VKVLLFNNEF (81 aa). Residues Asp-592 and Asn-619 each coordinate Mg(2+).

It belongs to the TPP enzyme family. Mg(2+) serves as cofactor. Requires thiamine diphosphate as cofactor.

It is found in the mitochondrion. It catalyses the reaction 2 pyruvate + H(+) = (2S)-2-acetolactate + CO2. It functions in the pathway amino-acid biosynthesis; L-isoleucine biosynthesis; L-isoleucine from 2-oxobutanoate: step 1/4. It participates in amino-acid biosynthesis; L-valine biosynthesis; L-valine from pyruvate: step 1/4. The protein is Acetolactate synthase, mitochondrial (ILV2) of Cryptococcus neoformans var. grubii serotype A (strain H99 / ATCC 208821 / CBS 10515 / FGSC 9487) (Filobasidiella neoformans var. grubii).